The sequence spans 182 residues: uncharacterized protein (182 aa).

The span at 1–23 (MILSDQNFLQTQWKEPQTAQSKN) shows a compositional bias: polar residues. Residues 1–33 (MILSDQNFLQTQWKEPQTAQSKNTESKCEFHGN) are disordered.

It belongs to the peptidase M24 family.

This is an uncharacterized protein from Caenorhabditis elegans.